We begin with the raw amino-acid sequence, 918 residues long: Interleukin-6 receptor subunit beta (918 aa).

A signal peptide spans 1–22 (MSALRIWLMQALLIFLTTESIG). Topologically, residues 23–618 (QLVEPCGYIY…TLKFAQGEIE (596 aa)) are extracellular. Residues 26-120 (EPCGYIYPEF…IEQNVYGITI (95 aa)) enclose the Ig-like C2-type domain. Cystine bridges form between C28-C54 and C48-C103. Residues N43, N61, N83, and N131 are each glycosylated (N-linked (GlcNAc...) asparagine). Fibronectin type-III domains are found at residues 125-215 (PPDI…NFDP), 223-323 (PPHN…TYED), 328-418 (APSF…IPGS), 422-516 (ASHP…LKQA), and 518-612 (PSKG…TLKF). An intrachain disulfide couples C134 to C144. N-linked (GlcNAc...) asparagine glycosylation is present at N157. A disulfide bridge links C172 with C181. N-linked (GlcNAc...) asparagine glycosylation is found at N205 and N226. The WSXWS motif motif lies at 309–313 (WSDWS). N-linked (GlcNAc...) asparagine glycans are attached at residues N382 and N389. An intrachain disulfide couples C457 to C465. N477 and N552 each carry an N-linked (GlcNAc...) asparagine glycan. A helical membrane pass occupies residues 619 to 640 (AIVVPVCLAFLLTTLLGVLFCF). At 641–918 (NKRDLIKKHI…TVRQGGYMPQ (278 aa)) the chain is on the cytoplasmic side. Residues 650 to 658 (IWPNVPDPS) carry the Box 1 motif motif. 4 disordered regions span residues 659–679 (KSHIAQWSPHTPPRHNFNSKD), 720–754 (TEGHSSGIGGSSCMSSSRPSISSSEENESAQSTAS), 773–795 (VQVFSRSESTQPLLDSEERPEDL), and 817–842 (SCSQPGASPDVSHFGRSSQVPSGSEE). A phosphoserine mark is found at S660 and S666. Low complexity predominate over residues 730–751 (SSCMSSSRPSISSSEENESAQS). The span at 773-785 (VQVFSRSESTQPL) shows a compositional bias: polar residues. S781, S788, S828, and S838 each carry phosphoserine.

This sequence belongs to the type I cytokine receptor family. Type 2 subfamily. As to quaternary structure, component of a hexamer of two molecules each of IL6, IL6R and IL6ST; associates with the complex IL6:IL6R but does not interact with IL6. Forms heterodimers composed of LIFR and IL6ST (type I OSM receptor) which are activated by LIF and OSM. Also forms heterodimers composed of OSMR and IL6ST (type II receptor) which are activated by OSM but not by LIF. Interacts with HCK. Interacts with INPP5D/SHIP1. Interacts with SRC and YES. Interacts with ARMH4; this interaction prevents IL6ST protein homodimerization and bridges ARMH4 with IL6R and STAT3 and therefore inhibits phosphorylation of STAT3 at 'Tyr-705'. Post-translationally, phosphorylation of Ser-781 down-regulates cell surface expression. In terms of processing, heavily N-glycosylated. Glycosylation is required for protein stability and localization in plasma membrane but not for ligand binding. As to expression, found in hepatocytes, astrocytes, fibroblasts and endothelial cells.

It is found in the cell membrane. Its function is as follows. Signal-transducing molecule. The receptor systems for IL6, LIF, OSM, CNTF, IL11, CTF1 and BSF3 can utilize IL6ST for initiating signal transmission. Binding of IL6 to IL6R induces IL6ST homodimerization and formation of a high-affinity receptor complex, which activates the intracellular JAK-MAPK and JAK-STAT3 signaling pathways. That causes phosphorylation of IL6ST tyrosine residues which in turn activates STAT3. In parallel, the IL6 signaling pathway induces the expression of two cytokine receptor signaling inhibitors, SOCS1 and SOCS3, which inhibit JAK and terminate the activity of the IL6 signaling pathway as a negative feedback loop. Also activates the yes-associated protein 1 (YAP) and NOTCH pathways to control inflammation-induced epithelial regeneration, independently of STAT3. Mediates signals which regulate immune response, hematopoiesis, pain control and bone metabolism. Has a role in embryonic development. Essential for survival of motor and sensory neurons and for differentiation of astrocytes. Required for expression of TRPA1 in nociceptive neurons. Required for the maintenance of PTH1R expression in the osteoblast lineage and for the stimulation of PTH-induced osteoblast differentiation. Required for normal trabecular bone mass and cortical bone composition. This Rattus norvegicus (Rat) protein is Interleukin-6 receptor subunit beta.